Consider the following 706-residue polypeptide: Frizzled-6 (706 aa).

The signal sequence occupies residues 1–18 (MEMFTFLLTCIFLPLLRG). Residues 19-132 (HSLFTCEPIT…CDRLQYCDET (114 aa)) form the FZ domain. Topologically, residues 19-201 (HSLFTCEPIT…SDELEFAKSF (183 aa)) are extracellular. 5 disulfide bridges follow: C24-C85, C32-C78, C69-C106, C95-C129, and C99-C123. Residue N38 is glycosylated (N-linked (GlcNAc...) asparagine). A helical transmembrane segment spans residues 202-222 (IGTVSIFCLCATLFTFLTFLI). The Cytoplasmic portion of the chain corresponds to 223-233 (DVRRFRYPERP). Residues 234 to 254 (IIYYSVCYSIVSLMYFIGFLL) form a helical membrane-spanning segment. Residues 255–284 (GDSTACNKADEKLELGDTVVLGSQNKACTV) are Extracellular-facing. Residues 285–305 (LFMLLYFFTMAGTVWWVILTI) form a helical membrane-spanning segment. Over 306 to 324 (TWFLAAGRKWSCEAIEQKA) the chain is Cytoplasmic. A helical membrane pass occupies residues 325 to 345 (VWFHAVAWGTPGFLTVMLLAM). Residues 346–370 (NKVEGDNISGVCFVGLYDLDASRYF) are Extracellular-facing. N352 carries an N-linked (GlcNAc...) asparagine glycan. The chain crosses the membrane as a helical span at residues 371–391 (VLLPLCLCVFVGLSLLLAGII). Topologically, residues 392–416 (SLNHVRQVIQHDGRNQEKLKKFMIR) are cytoplasmic. The chain crosses the membrane as a helical span at residues 417 to 437 (IGVFSGLYLVPLVTLLGCYVY). Topologically, residues 438–473 (EQVNRITWEITWVSDHCRQYHIPCPYQAKAKARPEL) are extracellular. The helical transmembrane segment at 474 to 494 (ALFMIKYLMTLIVGISAVFWV) threads the bilayer. The Cytoplasmic segment spans residues 495-706 (GSKKTCTEWA…EQGGGCHSDT (212 aa)). The Lys-Thr-X-X-X-Trp motif, mediates interaction with the PDZ domain of Dvl family members motif lies at 498 to 503 (KTCTEW). The disordered stretch occupies residues 588 to 706 (EIQTSPETSM…EQGGGCHSDT (119 aa)). Positions 646–658 (ARSEGRISPKSDI) are enriched in basic and acidic residues. S653 carries the phosphoserine modification. Over residues 662 to 672 (GLAQSNNLQVP) the composition is skewed to polar residues. Residues 673–685 (SSSEPSSLKGSTS) show a composition bias toward low complexity. Residues 694–706 (VRKEQGGGCHSDT) show a composition bias toward basic and acidic residues.

This sequence belongs to the G-protein coupled receptor Fz/Smo family. In terms of assembly, interacts with LMBR1L. In terms of processing, ubiquitinated by ZNRF3, leading to its degradation by the proteasome. Detected in adult heart, brain, placenta, lung, liver, skeletal muscle, kidney, pancreas, thymus, prostate, testis, ovary, small intestine and colon. In the fetus, expressed in brain, lung, liver and kidney.

The protein localises to the membrane. Its subcellular location is the cell membrane. It localises to the cell surface. The protein resides in the apical cell membrane. It is found in the cytoplasmic vesicle membrane. The protein localises to the endoplasmic reticulum membrane. Its function is as follows. Receptor for Wnt proteins. Most of frizzled receptors are coupled to the beta-catenin canonical signaling pathway, which leads to the activation of disheveled proteins, inhibition of GSK-3 kinase, nuclear accumulation of beta-catenin and activation of Wnt target genes. A second signaling pathway involving PKC and calcium fluxes has been seen for some family members, but it is not yet clear if it represents a distinct pathway or if it can be integrated in the canonical pathway, as PKC seems to be required for Wnt-mediated inactivation of GSK-3 kinase. Both pathways seem to involve interactions with G-proteins. May be involved in transduction and intercellular transmission of polarity information during tissue morphogenesis and/or in differentiated tissues. Together with FZD3, is involved in the neural tube closure and plays a role in the regulation of the establishment of planar cell polarity (PCP), particularly in the orientation of asymmetric bundles of stereocilia on the apical faces of a subset of auditory and vestibular sensory cells located in the inner ear. This chain is Frizzled-6 (FZD6), found in Homo sapiens (Human).